We begin with the raw amino-acid sequence, 271 residues long: D-methionine-binding lipoprotein MetQ (271 aa).

The N-terminal stretch at 1–22 is a signal peptide; the sequence is MAFKFKTFAAVGALIGSLALVG. Cys-23 is lipidated: N-palmitoyl cysteine. The S-diacylglycerol cysteine moiety is linked to residue Cys-23.

It belongs to the NlpA lipoprotein family.

The protein resides in the cell membrane. Functionally, this protein is a component of a D-methionine permease, a binding protein-dependent, ATP-driven transport system. The polypeptide is D-methionine-binding lipoprotein MetQ (metQ) (Escherichia coli (strain K12)).